We begin with the raw amino-acid sequence, 742 residues long: uncharacterized protein (742 aa).

A disordered region spans residues 1-102; that stretch reads MMLLKRSNDN…FTQTKPNNTD (102 aa). Low complexity predominate over residues 18-28; that stretch reads NRQNRQNNRQN. A compositionally biased stretch (basic and acidic residues) spans 48–57; the sequence is RDSSRMDPVD. Composition is skewed to polar residues over residues 60-69 and 77-99; these read TLISFTSGKP and HDTG…TKPN.

This is an uncharacterized protein from Acanthamoeba polyphaga mimivirus (APMV).